The primary structure comprises 512 residues: Solute carrier family 2, facilitated glucose transporter member 7 (512 aa).

Topologically, residues 1 to 21 (MENKEAGTPPPIPSREGRLQP) are cytoplasmic. Residues 22–42 (TLLLATLSAAFGSAFQYGYNL) traverse the membrane as a helical segment. At 43–78 (SVVNTPHKVFKSFYNETYFERHATFMDGKLMLLLWS) the chain is on the extracellular side. Asparagine 57 carries N-linked (GlcNAc...) asparagine glycosylation. A helical membrane pass occupies residues 79 to 99 (CTVSMFPLGGLLGSLLVGLLV). Over 100 to 107 (DSCGRKGT) the chain is Cytoplasmic. Residues 108-128 (LLINNIFAIIPAILMGVSKVA) traverse the membrane as a helical segment. Residues 129–138 (KAFELIVFSR) are Extracellular-facing. A helical membrane pass occupies residues 139–159 (VVLGVCAGISYSALPMYLGEL). Topologically, residues 160–172 (APKNLRGMVGTMT) are cytoplasmic. Residues 173-193 (EVFVIVGVFLAQIFSLQAILG) traverse the membrane as a helical segment. The Extracellular segment spans residues 194–198 (NPAGW). Residues 199 to 219 (PVLLALTGVPALLQLLTLPFF) traverse the membrane as a helical segment. Residues 220 to 281 (PESPRYSLIQ…LHLCALRSLR (62 aa)) are Cytoplasmic-facing. A helical membrane pass occupies residues 282–302 (WQLLSIIVLMAGQQLSGINAI). Residues 294–295 (QQ) and asparagine 300 each bind D-glucose. At 303 to 321 (NYYADTIYTSAGVEAAHSQ) the chain is on the extracellular side. A helical membrane pass occupies residues 322–342 (YVTVGSGVVNIVMTITSAVLV). A D-glucose-binding site is contributed by asparagine 331. The Cytoplasmic segment spans residues 343 to 350 (ERLGRRHL). The helical transmembrane segment at 351-371 (LLAGYGICGSACLVLTVVLLF) threads the bilayer. The Extracellular segment spans residues 372-379 (QNRVPELS). The helical transmembrane segment at 380–400 (YLGIICVFAYIAGHSIGPSPV) threads the bilayer. The Cytoplasmic portion of the chain corresponds to 401 to 415 (PSVVRTEIFLQSSRR). The chain crosses the membrane as a helical span at residues 416–436 (AAFMVDGAVHWLTNFIIGFLF). At 437-445 (PSIQEAIGA) the chain is on the extracellular side. Residues 446–466 (YSFIIFAGICLLTAIYIYVVI) form a helical membrane-spanning segment. Residues 467-512 (PETKGKTFVEINRIFAKRNRVKLPEEKEETIDAGPPTASPAKETSF) lie on the Cytoplasmic side of the membrane. The interval 491–512 (EEKEETIDAGPPTASPAKETSF) is disordered.

Belongs to the major facilitator superfamily. Sugar transporter (TC 2.A.1.1) family. Glucose transporter subfamily. Expressed in small intestine and colon. Weakly expressed in testis and prostate.

Its subcellular location is the cell membrane. It is found in the apical cell membrane. It carries out the reaction D-glucose(out) = D-glucose(in). The catalysed reaction is D-fructose(out) = D-fructose(in). Its activity is regulated as follows. Glucose and fructose transport are inhibited by the flavonoid apigenin. In terms of biological role, probable sugar transporter. Even if its physiological substrate is subject to discussion, it is able to transport glucose and fructose. Does not transport galactose, 2-deoxy-d-glucose and xylose. This is Solute carrier family 2, facilitated glucose transporter member 7 from Homo sapiens (Human).